A 196-amino-acid polypeptide reads, in one-letter code: 7-methyl-GTP pyrophosphatase (196 aa).

Asp-69 acts as the Proton acceptor in catalysis.

Belongs to the Maf family. YceF subfamily. A divalent metal cation is required as a cofactor.

It localises to the cytoplasm. The enzyme catalyses N(7)-methyl-GTP + H2O = N(7)-methyl-GMP + diphosphate + H(+). Nucleoside triphosphate pyrophosphatase that hydrolyzes 7-methyl-GTP (m(7)GTP). May have a dual role in cell division arrest and in preventing the incorporation of modified nucleotides into cellular nucleic acids. The protein is 7-methyl-GTP pyrophosphatase of Photorhabdus laumondii subsp. laumondii (strain DSM 15139 / CIP 105565 / TT01) (Photorhabdus luminescens subsp. laumondii).